Here is a 263-residue protein sequence, read N- to C-terminus: HTH-type transcriptional repressor NanR (263 aa).

Positions 30–98 (KKLSEMVEEE…NGERARVSRP (69 aa)) constitute an HTH gntR-type domain. Residues 58–77 (ERELMAFFNVGRPSVREALA) constitute a DNA-binding region (H-T-H motif).

It belongs to the NanR family.

Transcriptional repressor that controls expression of the genes required for the catabolism of sialic acids. The sequence is that of HTH-type transcriptional repressor NanR from Salmonella arizonae (strain ATCC BAA-731 / CDC346-86 / RSK2980).